Reading from the N-terminus, the 555-residue chain is Dihydroxy-acid dehydratase (555 aa).

Position 80 (Asp80) interacts with Mg(2+). Cys121 provides a ligand contact to [2Fe-2S] cluster. Residues Asp122 and Lys123 each contribute to the Mg(2+) site. An N6-carboxylysine modification is found at Lys123. [2Fe-2S] cluster is bound at residue Cys193. Glu444 provides a ligand contact to Mg(2+). The active-site Proton acceptor is Ser470.

Belongs to the IlvD/Edd family. Homodimer. [2Fe-2S] cluster is required as a cofactor. The cofactor is Mg(2+).

It carries out the reaction (2R)-2,3-dihydroxy-3-methylbutanoate = 3-methyl-2-oxobutanoate + H2O. The enzyme catalyses (2R,3R)-2,3-dihydroxy-3-methylpentanoate = (S)-3-methyl-2-oxopentanoate + H2O. The protein operates within amino-acid biosynthesis; L-isoleucine biosynthesis; L-isoleucine from 2-oxobutanoate: step 3/4. It participates in amino-acid biosynthesis; L-valine biosynthesis; L-valine from pyruvate: step 3/4. Functions in the biosynthesis of branched-chain amino acids. Catalyzes the dehydration of (2R,3R)-2,3-dihydroxy-3-methylpentanoate (2,3-dihydroxy-3-methylvalerate) into 2-oxo-3-methylpentanoate (2-oxo-3-methylvalerate) and of (2R)-2,3-dihydroxy-3-methylbutanoate (2,3-dihydroxyisovalerate) into 2-oxo-3-methylbutanoate (2-oxoisovalerate), the penultimate precursor to L-isoleucine and L-valine, respectively. This chain is Dihydroxy-acid dehydratase, found in Aquifex aeolicus (strain VF5).